The sequence spans 478 residues: uncharacterized protein (478 aa).

The 119-residue stretch at 2-120 (MNMITVIGFG…NIDKIINILE (119 aa)) folds into the RCK N-terminal domain.

This is an uncharacterized protein from Methanocaldococcus jannaschii (strain ATCC 43067 / DSM 2661 / JAL-1 / JCM 10045 / NBRC 100440) (Methanococcus jannaschii).